We begin with the raw amino-acid sequence, 1887 residues long: Nuclear pore membrane glycoprotein 210 (1887 aa).

The first 26 residues, 1 to 26, serve as a signal peptide directing secretion; the sequence is MAARGRGLLLLTLSVLLAAGPSAAAA. Residues 27 to 1808 are Perinuclear space-facing; the sequence is KLNIPKVLLP…LFQHFLDSYQ (1782 aa). Residues Asn-44, Asn-337, Asn-405, Asn-484, Asn-681, Asn-801, Asn-926, Asn-1039, Asn-1116, Asn-1135, Asn-1362, and Asn-1441 are each glycosylated (N-linked (GlcNAc...) asparagine). Residues 1078–1151 form the BIG2 domain; that stretch reads FPPFRLMPRK…VQAVDAETGK (74 aa). The helical transmembrane segment at 1809–1829 threads the bilayer; the sequence is VMFFTLFALLAGTAVMIIAYH. The Cytoplasmic portion of the chain corresponds to 1830-1887; it reads TVCTPRDLAVPAALTPRASPGHSPHYFAASSPTSPNALPPARKASPPSGLWSPAYASH. Phosphothreonine is present on Thr-1844. A disordered region spans residues 1853–1887; it reads PHYFAASSPTSPNALPPARKASPPSGLWSPAYASH. Ser-1874, Ser-1877, Ser-1881, and Ser-1886 each carry phosphoserine.

The protein belongs to the NUP210 family. Forms dimers and possibly higher-order oligomers. Post-translationally, N-glycosylated, but not all potential glycosylation sites may be used. Contains high-mannose type oligosaccharides. Phosphorylated at Ser-1881 in mitosis specifically; not phosphorylated in interphase. As to expression, ubiquitous expression, with highest levels in lung, liver, pancreas, testis, and ovary, intermediate levels in brain, kidney, and spleen, and lowest levels in heart and skeletal muscle.

It localises to the nucleus. It is found in the nuclear pore complex. Its subcellular location is the nucleus membrane. The protein localises to the endoplasmic reticulum membrane. In terms of biological role, nucleoporin essential for nuclear pore assembly and fusion, nuclear pore spacing, as well as structural integrity. In Homo sapiens (Human), this protein is Nuclear pore membrane glycoprotein 210 (NUP210).